The sequence spans 54 residues: Putative neurotoxin-I (54 aa).

Disulfide bonds link cysteine 20-cysteine 42, cysteine 28-cysteine 51, and cysteine 32-cysteine 53.

In terms of tissue distribution, expressed by the venom gland.

Its subcellular location is the secreted. The sequence is that of Putative neurotoxin-I from Lychas mucronatus (Chinese swimming scorpion).